Consider the following 90-residue polypeptide: MKTAIFTVVLALAVFAVLSFGWEANEKALSEEFTELIHEKEAASETEARECRYFWGECHDHMPCCDWLVCRYKWPITYNICVWSRTFPEK.

A signal peptide spans 1 to 19 (MKTAIFTVVLALAVFAVLS). Residues 20 to 50 (FGWEANEKALSEEFTELIHEKEAASETEARE) constitute a propeptide that is removed on maturation. Disulfide bonds link Cys51–Cys65, Cys58–Cys70, and Cys64–Cys81.

The protein belongs to the neurotoxin 10 (Hwtx-1) family. 13 (Hntx-13) subfamily. Expressed by the venom gland.

Its subcellular location is the secreted. Ion channel inhibitor. The protein is U7-theraphotoxin-Hhn1c of Cyriopagopus hainanus (Chinese bird spider).